Reading from the N-terminus, the 88-residue chain is UPF0297 protein Cphy_2298 (88 aa).

Belongs to the UPF0297 family.

This chain is UPF0297 protein Cphy_2298, found in Lachnoclostridium phytofermentans (strain ATCC 700394 / DSM 18823 / ISDg) (Clostridium phytofermentans).